The primary structure comprises 419 residues: UDP-N-acetylglucosamine 1-carboxyvinyltransferase (419 aa).

Residue 22–23 (KN) participates in phosphoenolpyruvate binding. Arg-91 is a binding site for UDP-N-acetyl-alpha-D-glucosamine. The active-site Proton donor is the Cys-115. Cys-115 is modified (2-(S-cysteinyl)pyruvic acid O-phosphothioketal). UDP-N-acetyl-alpha-D-glucosamine contacts are provided by residues 120-124 (RPVDL), 160-163 (KVSV), Asp-305, and Ile-327.

The protein belongs to the EPSP synthase family. MurA subfamily.

It localises to the cytoplasm. It carries out the reaction phosphoenolpyruvate + UDP-N-acetyl-alpha-D-glucosamine = UDP-N-acetyl-3-O-(1-carboxyvinyl)-alpha-D-glucosamine + phosphate. It participates in cell wall biogenesis; peptidoglycan biosynthesis. Its function is as follows. Cell wall formation. Adds enolpyruvyl to UDP-N-acetylglucosamine. The chain is UDP-N-acetylglucosamine 1-carboxyvinyltransferase from Klebsiella pneumoniae (strain 342).